We begin with the raw amino-acid sequence, 128 residues long: Sulfurtransferase TusD (128 aa).

C78 serves as the catalytic Cysteine persulfide intermediate.

This sequence belongs to the DsrE/TusD family. In terms of assembly, heterohexamer, formed by a dimer of trimers. The hexameric TusBCD complex contains 2 copies each of TusB, TusC and TusD. The TusBCD complex interacts with TusE.

The protein resides in the cytoplasm. In terms of biological role, part of a sulfur-relay system required for 2-thiolation of 5-methylaminomethyl-2-thiouridine (mnm(5)s(2)U) at tRNA wobble positions. Accepts sulfur from TusA and transfers it in turn to TusE. The protein is Sulfurtransferase TusD of Shigella boydii serotype 18 (strain CDC 3083-94 / BS512).